Consider the following 209-residue polypeptide: A-type ATP synthase subunit D (209 aa).

Belongs to the V-ATPase D subunit family. Has multiple subunits with at least A(3), B(3), C, D, E, F, H, I and proteolipid K(x).

The protein resides in the cell membrane. In terms of biological role, component of the A-type ATP synthase that produces ATP from ADP in the presence of a proton gradient across the membrane. This Methanosarcina acetivorans (strain ATCC 35395 / DSM 2834 / JCM 12185 / C2A) protein is A-type ATP synthase subunit D.